Reading from the N-terminus, the 202-residue chain is Small ribosomal subunit protein uS4c (202 aa).

The region spanning 90–153 (MRLDNVIFRL…KSEAIISKNI (64 aa)) is the S4 RNA-binding domain.

The protein belongs to the universal ribosomal protein uS4 family. In terms of assembly, part of the 30S ribosomal subunit. Contacts protein S5. The interaction surface between S4 and S5 is involved in control of translational fidelity.

The protein localises to the plastid. The protein resides in the chloroplast. Its function is as follows. One of the primary rRNA binding proteins, it binds directly to 16S rRNA where it nucleates assembly of the body of the 30S subunit. Functionally, with S5 and S12 plays an important role in translational accuracy. The sequence is that of Small ribosomal subunit protein uS4c (rps4) from Hypopterygium laricinum (Moss).